The sequence spans 156 residues: SsrA-binding protein (156 aa).

This sequence belongs to the SmpB family.

It localises to the cytoplasm. Required for rescue of stalled ribosomes mediated by trans-translation. Binds to transfer-messenger RNA (tmRNA), required for stable association of tmRNA with ribosomes. tmRNA and SmpB together mimic tRNA shape, replacing the anticodon stem-loop with SmpB. tmRNA is encoded by the ssrA gene; the 2 termini fold to resemble tRNA(Ala) and it encodes a 'tag peptide', a short internal open reading frame. During trans-translation Ala-aminoacylated tmRNA acts like a tRNA, entering the A-site of stalled ribosomes, displacing the stalled mRNA. The ribosome then switches to translate the ORF on the tmRNA; the nascent peptide is terminated with the 'tag peptide' encoded by the tmRNA and targeted for degradation. The ribosome is freed to recommence translation, which seems to be the essential function of trans-translation. This Staphylococcus haemolyticus (strain JCSC1435) protein is SsrA-binding protein.